Consider the following 128-residue polypeptide: Holo-[acyl-carrier-protein] synthase (128 aa).

2 residues coordinate Mg(2+): aspartate 10 and glutamate 59.

The protein belongs to the P-Pant transferase superfamily. AcpS family. It depends on Mg(2+) as a cofactor.

The protein localises to the cytoplasm. It carries out the reaction apo-[ACP] + CoA = holo-[ACP] + adenosine 3',5'-bisphosphate + H(+). Its function is as follows. Transfers the 4'-phosphopantetheine moiety from coenzyme A to a Ser of acyl-carrier-protein. This Syntrophotalea carbinolica (strain DSM 2380 / NBRC 103641 / GraBd1) (Pelobacter carbinolicus) protein is Holo-[acyl-carrier-protein] synthase.